Reading from the N-terminus, the 330-residue chain is 5'-AMP-activated protein kinase subunit gamma-1 (330 aa).

The disordered stretch occupies residues 1–21; the sequence is MESVAAESSPALENEHFQETP. CBS domains follow at residues 42-102, 124-186, and 197-259; these read PTSS…KSAL, SFKP…PKPE, and IGTY…NLDV. Residues Arg-69, 84 to 89, Val-129, 150 to 151, and Lys-169 contribute to the ADP site; these read MLTITD and HR. AMP-binding positions include Arg-69, 84–89, Val-129, His-150, 150–151, Lys-169, Thr-199, Ala-204, 225–226, and 241–244; these read MLTITD, HR, SA, and SKFD. ATP contacts are provided by residues Arg-69, 84–89, Val-129, 150–151, Arg-151, and Lys-169; these read MLTITD and HR. An AMPK pseudosubstrate motif is present at residues 137 to 158; the sequence is LFDAVSSLIRNKIHRLPVIDPE. 241-244 contributes to the ADP binding site; sequence SKFD. Position 241–244 (241–244) interacts with ATP; the sequence is SKFD. A Phosphoserine; by ULK1 modification is found at Ser-260. Thr-262 is modified (phosphothreonine; by ULK1). Arg-268 serves as a coordination point for ADP. Arg-268 lines the AMP pocket. Arg-268 contributes to the ATP binding site. Ser-269 bears the Phosphoserine; by ULK1 mark. The CBS 4 domain maps to 271–328; the sequence is YFEGVLKCYLHETLETIINRLVEAEVHRLVVVDEHDVVKGIVSLSDILQALVLTGGEK. Residues Leu-276 and 297–298 contribute to the ADP site; that span reads HR. Residues Leu-276, His-297, 297–298, and 313–316 each bind AMP; these read HR and SLSD. Residues Leu-276 and 297 to 298 each bind ATP; that span reads HR.

It belongs to the 5'-AMP-activated protein kinase gamma subunit family. AMPK is a heterotrimer of an alpha catalytic subunit (PRKAA1 or PRKAA2), a beta (PRKAB1 or PRKAB2) and a gamma non-catalytic subunits (PRKAG1, PRKAG2 or PRKAG3). Interacts with FNIP1 and FNIP2. Phosphorylated by ULK1 and ULK2; leading to negatively regulate AMPK activity and suggesting the existence of a regulatory feedback loop between ULK1, ULK2 and AMPK. Post-translationally, glycosylated; O-GlcNAcylated by OGT, promoting the AMP-activated protein kinase (AMPK) activity.

In terms of biological role, AMP/ATP-binding subunit of AMP-activated protein kinase (AMPK), an energy sensor protein kinase that plays a key role in regulating cellular energy metabolism. In response to reduction of intracellular ATP levels, AMPK activates energy-producing pathways and inhibits energy-consuming processes: inhibits protein, carbohydrate and lipid biosynthesis, as well as cell growth and proliferation. AMPK acts via direct phosphorylation of metabolic enzymes, and by longer-term effects via phosphorylation of transcription regulators. Also acts as a regulator of cellular polarity by remodeling the actin cytoskeleton; probably by indirectly activating myosin. Gamma non-catalytic subunit mediates binding to AMP, ADP and ATP, leading to activate or inhibit AMPK: AMP-binding results in allosteric activation of alpha catalytic subunit (PRKAA1 or PRKAA2) both by inducing phosphorylation and preventing dephosphorylation of catalytic subunits. ADP also stimulates phosphorylation, without stimulating already phosphorylated catalytic subunit. ATP promotes dephosphorylation of catalytic subunit, rendering the AMPK enzyme inactive. The polypeptide is 5'-AMP-activated protein kinase subunit gamma-1 (Prkag1) (Mus musculus (Mouse)).